We begin with the raw amino-acid sequence, 148 residues long: Large ribosomal subunit protein bL9 (148 aa).

Belongs to the bacterial ribosomal protein bL9 family.

In terms of biological role, binds to the 23S rRNA. In Bifidobacterium animalis subsp. lactis (strain AD011), this protein is Large ribosomal subunit protein bL9.